The sequence spans 371 residues: Cytochrome b (371 aa).

Transmembrane regions (helical) follow at residues 25-45 (FGSMLLICLTLQIMTGFFLAI), 69-90 (WIMQNLHTIGASMFFICIYTHI), 105-125 (WLSGTTLLITLMATAFFGYVL), and 170-190 (FFALHFIIPFAIISLSSIHII). Heme b is bound by residues His-75 and His-89. Heme b contacts are provided by His-174 and His-188. His-193 is an a ubiquinone binding site. Helical transmembrane passes span 218-238 (YKDTLTSTFMLITLFIILSFT), 280-300 (LGGTLALLMSVIILTTMPFTH), 312-332 (LAQTMFWMLIATFITITWTAS), and 339-358 (FIIISQTTSIFYFSFFIMNP).

It belongs to the cytochrome b family. In terms of assembly, the cytochrome bc1 complex contains 3 respiratory subunits (MT-CYB, CYC1 and UQCRFS1), 2 core proteins (UQCRC1 and UQCRC2) and probably 6 low-molecular weight proteins. Heme b serves as cofactor.

The protein localises to the mitochondrion inner membrane. Functionally, component of the ubiquinol-cytochrome c reductase complex (complex III or cytochrome b-c1 complex) that is part of the mitochondrial respiratory chain. The b-c1 complex mediates electron transfer from ubiquinol to cytochrome c. Contributes to the generation of a proton gradient across the mitochondrial membrane that is then used for ATP synthesis. The chain is Cytochrome b (MT-CYB) from Sinomicrurus macclellandi (Macclelland's coral snake).